We begin with the raw amino-acid sequence, 294 residues long: Lipoprotein NlpI (294 aa).

An N-terminal signal peptide occupies residues 1-18; the sequence is MKPFLRWCFVATALTLAG. Residue cysteine 19 is the site of N-palmitoyl cysteine attachment. The S-diacylglycerol cysteine moiety is linked to residue cysteine 19. TPR repeat units follow at residues 62–95, 96–129, and 234–267; these read AQLLYERGVLYDSLGLRALARNDFSQALAIRPDM, PEVFNYLGIYLTQAGNFDAAYEAFDSVLELDPTY, and SETNFYLGKYYLSLGDLDSATALFKLAVANNVHN.

As to quaternary structure, homodimer.

The protein resides in the cell membrane. Functionally, may be involved in cell division. May play a role in bacterial septation or regulation of cell wall degradation during cell division. The protein is Lipoprotein NlpI (nlpI) of Escherichia coli O157:H7.